A 230-amino-acid chain; its full sequence is Ribosome biogenesis protein SLX9 homolog (230 aa).

Residues 1-11 (MGKVRGLRARV) are compositionally biased toward basic residues. Disordered stretches follow at residues 1 to 42 (MGKV…SAAG) and 155 to 187 (LGLEAGSRRQARSRESNKPRPSELSRMSAAQRQ). Pro residues predominate over residues 25–38 (GPAPPAPEATPPPA). Position 34 is a phosphothreonine (Thr-34). The span at 166-177 (RSRESNKPRPSE) shows a compositional bias: basic and acidic residues. Position 203 is a phosphoserine (Ser-203).

This sequence belongs to the SLX9 family. As to expression, not detected in any tested tissue.

It is found in the nucleus. Its subcellular location is the nucleolus. May be involved in ribosome biogenesis. The chain is Ribosome biogenesis protein SLX9 homolog from Homo sapiens (Human).